A 389-amino-acid polypeptide reads, in one-letter code: Large ribosomal subunit protein uL3 (389 aa).

The interval 1–36 (MSHRKFEHPRHGSLGFLPRKRSSRHRGKVKSFPKDD) is disordered. Residues 18-31 (PRKRSSRHRGKVKS) are compositionally biased toward basic residues.

This sequence belongs to the universal ribosomal protein uL3 family.

It localises to the cytoplasm. Functionally, the L3 protein is a component of the large subunit of cytoplasmic ribosomes. This Oryza sativa subsp. japonica (Rice) protein is Large ribosomal subunit protein uL3 (RPL3).